A 59-amino-acid polypeptide reads, in one-letter code: Large ribosomal subunit protein uL30 (59 aa).

This sequence belongs to the universal ribosomal protein uL30 family. In terms of assembly, part of the 50S ribosomal subunit.

This Staphylococcus aureus (strain JH1) protein is Large ribosomal subunit protein uL30.